The sequence spans 236 residues: 3-deoxy-D-manno-octulosonic acid kinase (236 aa).

The active site involves Asp167.

The protein belongs to the protein kinase superfamily. KdkA/RfaP family.

Its subcellular location is the cell inner membrane. The catalysed reaction is an alpha-Kdo-(2-&gt;6)-lipid IVA + ATP = a 4-O-phospho-alpha-Kdo-(2-&gt;6)-lipid IVA + ADP + H(+). It participates in bacterial outer membrane biogenesis; LPS core biosynthesis. Catalyzes the ATP-dependent phosphorylation of the 3-deoxy-D-manno-octulosonic acid (Kdo) residue in Kdo-lipid IV(A) at the 4-OH position. The chain is 3-deoxy-D-manno-octulosonic acid kinase from Vibrio vulnificus (strain CMCP6).